Here is a 240-residue protein sequence, read N- to C-terminus: NAD(P)H-quinone oxidoreductase subunit K (240 aa).

4 residues coordinate [4Fe-4S] cluster: Cys55, Cys56, Cys120, and Cys151.

This sequence belongs to the complex I 20 kDa subunit family. As to quaternary structure, NDH-1 can be composed of about 15 different subunits; different subcomplexes with different compositions have been identified which probably have different functions. The cofactor is [4Fe-4S] cluster.

Its subcellular location is the cellular thylakoid membrane. It carries out the reaction a plastoquinone + NADH + (n+1) H(+)(in) = a plastoquinol + NAD(+) + n H(+)(out). It catalyses the reaction a plastoquinone + NADPH + (n+1) H(+)(in) = a plastoquinol + NADP(+) + n H(+)(out). In terms of biological role, NDH-1 shuttles electrons from an unknown electron donor, via FMN and iron-sulfur (Fe-S) centers, to quinones in the respiratory and/or the photosynthetic chain. The immediate electron acceptor for the enzyme in this species is believed to be plastoquinone. Couples the redox reaction to proton translocation, and thus conserves the redox energy in a proton gradient. Cyanobacterial NDH-1 also plays a role in inorganic carbon-concentration. This Trichodesmium erythraeum (strain IMS101) protein is NAD(P)H-quinone oxidoreductase subunit K.